A 33-amino-acid chain; its full sequence is Photosystem II reaction center protein Psb30 (33 aa).

The chain crosses the membrane as a helical span at residues 5 to 25 (VLAQLTVLTLIVISGPLVIAL).

Belongs to the Psb30/Ycf12 family. As to quaternary structure, PSII is composed of 1 copy each of membrane proteins PsbA, PsbB, PsbC, PsbD, PsbE, PsbF, PsbH, PsbI, PsbJ, PsbK, PsbL, PsbM, PsbT, PsbX, PsbY, PsbZ, Psb30/Ycf12, peripheral proteins of the oxygen-evolving complex and a large number of cofactors. It forms dimeric complexes.

The protein resides in the plastid. The protein localises to the chloroplast thylakoid membrane. Functionally, a core subunit of photosystem II (PSII), probably helps stabilize the reaction center. In Cycas taitungensis (Prince sago), this protein is Photosystem II reaction center protein Psb30.